Reading from the N-terminus, the 578-residue chain is Vacuolar protein 8 (578 aa).

Gly-2 carries N-myristoyl glycine lipidation. 3 S-palmitoyl cysteine lipidation sites follow: Cys-4, Cys-5, and Cys-7. Ser-11 and Ser-16 each carry phosphoserine. ARM repeat units follow at residues 37–75 (DKDQ…AEIT), 76–114 (EKYV…NLAV), 116–155 (NENK…NLAT), 157–196 (DDNK…NMTH), 198–237 (EENR…NIAV), 239–280 (EANR…NLAS), 282–321 (TSYQ…NISI), 323–363 (PLNE…NLAA), and 407–446 (DVSK…NLCS). Residue Lys-77 forms a Glycyl lysine isopeptide (Lys-Gly) (interchain with G-Cter in ubiquitin) linkage. Lys-515 participates in a covalent cross-link: Glycyl lysine isopeptide (Lys-Gly) (interchain with G-Cter in ubiquitin). A disordered region spans residues 527–557 (SGIDVKNPGSNNNPSSNDNNSNNNDTGSEHQ). Low complexity predominate over residues 533-552 (NPGSNNNPSSNDNNSNNNDT).

It belongs to the beta-catenin family. As to quaternary structure, interacts with NVJ1. Forms heterotetramers of two VAC8 and two NVJ1 or two VAC8 and two ATG13. Palmitoylated on one or more of its N-terminal cysteine residues by PFA3, which is required for vacuole fusion.

It is found in the vacuole membrane. Functionally, functions in both vacuole inheritance and protein targeting from the cytoplasm to vacuole (cvt). Involved in the formation of nucleus-vacuole junctions (NVJs) during piecemeal microautophagy of the nucleus (PMN). NVJs are interorganelle interfaces mediated by NVJ1 in the nuclear envelope and VAC8 on the vacuole membrane. Together, NVJ1 and VAC8 form Velcro-like patches through which teardrop-like portions of the nucleus are pinched off into the vacuolar lumen and degraded by the PMN process. This is Vacuolar protein 8 (VAC8) from Saccharomyces cerevisiae (strain ATCC 204508 / S288c) (Baker's yeast).